The primary structure comprises 188 residues: dCTP deaminase (188 aa).

DCTP contacts are provided by residues 111-116, 135-137, glutamine 156, tyrosine 170, and glutamine 180; these read KSTYAR and TLE. The active-site Proton donor/acceptor is glutamate 137.

This sequence belongs to the dCTP deaminase family. Homotrimer.

It carries out the reaction dCTP + H2O + H(+) = dUTP + NH4(+). The protein operates within pyrimidine metabolism; dUMP biosynthesis; dUMP from dCTP (dUTP route): step 1/2. Functionally, catalyzes the deamination of dCTP to dUTP. The sequence is that of dCTP deaminase from Legionella pneumophila (strain Paris).